The primary structure comprises 244 residues: Protein-L-isoaspartate O-methyltransferase (244 aa).

Residues 1–39 (MINPFSSFRWRHSSRSPAGIPEVEPQPPDASDPFASQRE) are disordered. The active site involves S92.

Belongs to the methyltransferase superfamily. L-isoaspartyl/D-aspartyl protein methyltransferase family.

It is found in the cytoplasm. It carries out the reaction [protein]-L-isoaspartate + S-adenosyl-L-methionine = [protein]-L-isoaspartate alpha-methyl ester + S-adenosyl-L-homocysteine. Catalyzes the methyl esterification of L-isoaspartyl residues in peptides and proteins that result from spontaneous decomposition of normal L-aspartyl and L-asparaginyl residues. It plays a role in the repair and/or degradation of damaged proteins. In Synechococcus sp. (strain JA-2-3B'a(2-13)) (Cyanobacteria bacterium Yellowstone B-Prime), this protein is Protein-L-isoaspartate O-methyltransferase.